The following is a 388-amino-acid chain: Phosphopentomutase (388 aa).

The Mn(2+) site is built by D11, D283, H288, D324, H325, and H336.

The protein belongs to the phosphopentomutase family. Requires Mn(2+) as cofactor.

Its subcellular location is the cytoplasm. It catalyses the reaction 2-deoxy-alpha-D-ribose 1-phosphate = 2-deoxy-D-ribose 5-phosphate. The catalysed reaction is alpha-D-ribose 1-phosphate = D-ribose 5-phosphate. The protein operates within carbohydrate degradation; 2-deoxy-D-ribose 1-phosphate degradation; D-glyceraldehyde 3-phosphate and acetaldehyde from 2-deoxy-alpha-D-ribose 1-phosphate: step 1/2. In terms of biological role, isomerase that catalyzes the conversion of deoxy-ribose 1-phosphate (dRib-1-P) and ribose 1-phosphate (Rib-1-P) to deoxy-ribose 5-phosphate (dRib-5-P) and ribose 5-phosphate (Rib-5-P), respectively. This chain is Phosphopentomutase, found in Anaeromyxobacter sp. (strain K).